The following is a 369-amino-acid chain: Cytokine receptor common subunit gamma (369 aa).

The signal sequence occupies residues 1–22 (MLKLLLSPRSFLVLQLLLLRAG). The Extracellular portion of the chain corresponds to 23-263 (WSSKVLMSSA…ENPSLFALEA (241 aa)). C62 and C72 form a disulfide bridge. 4 N-linked (GlcNAc...) asparagine glycosylation sites follow: N71, N75, N84, and N96. An intrachain disulfide couples C102 to C115. Residues 156–254 (APENLTLSNL…VHWGSHTVEE (99 aa)) form the Fibronectin type-III domain. Residues N159 and N164 are each glycosylated (N-linked (GlcNAc...) asparagine). The WSXWS motif motif lies at 238–242 (WSKWS). A helical membrane pass occupies residues 264–284 (VLIPVGTMGLIITLIFVYCWL). Residues 285–369 (ERMPPIPPIK…PPCYSLKPEA (85 aa)) are Cytoplasmic-facing. The short motif at 286-294 (RMPPIPPIK) is the Box 1 motif element.

The protein belongs to the type I cytokine receptor family. Type 5 subfamily. As to quaternary structure, the gamma subunit is common to the IL2, IL4, IL7, IL15, IL21 and probably also the IL13 receptors. Interacts with SHB upon interleukin stimulation. Interacts with IL9.

The protein resides in the cell membrane. It is found in the cell surface. Common subunit for the receptors for a variety of interleukins. Probably in association with IL15RA, involved in the stimulation of neutrophil phagocytosis by IL15. This chain is Cytokine receptor common subunit gamma (Il2rg), found in Mus musculus (Mouse).